The sequence spans 211 residues: Thiamine-phosphate synthase (211 aa).

4-amino-2-methyl-5-(diphosphooxymethyl)pyrimidine-binding positions include 37–41 (QLRIK) and asparagine 69. Mg(2+) is bound by residues aspartate 70 and aspartate 89. Serine 108 serves as a coordination point for 4-amino-2-methyl-5-(diphosphooxymethyl)pyrimidine. 2-[(2R,5Z)-2-carboxy-4-methylthiazol-5(2H)-ylidene]ethyl phosphate is bound at residue 134 to 136 (TQT). Lysine 137 is a 4-amino-2-methyl-5-(diphosphooxymethyl)pyrimidine binding site. 2-[(2R,5Z)-2-carboxy-4-methylthiazol-5(2H)-ylidene]ethyl phosphate is bound by residues glycine 166 and 186-187 (VS).

Belongs to the thiamine-phosphate synthase family. Requires Mg(2+) as cofactor.

It carries out the reaction 2-[(2R,5Z)-2-carboxy-4-methylthiazol-5(2H)-ylidene]ethyl phosphate + 4-amino-2-methyl-5-(diphosphooxymethyl)pyrimidine + 2 H(+) = thiamine phosphate + CO2 + diphosphate. The enzyme catalyses 2-(2-carboxy-4-methylthiazol-5-yl)ethyl phosphate + 4-amino-2-methyl-5-(diphosphooxymethyl)pyrimidine + 2 H(+) = thiamine phosphate + CO2 + diphosphate. It catalyses the reaction 4-methyl-5-(2-phosphooxyethyl)-thiazole + 4-amino-2-methyl-5-(diphosphooxymethyl)pyrimidine + H(+) = thiamine phosphate + diphosphate. It functions in the pathway cofactor biosynthesis; thiamine diphosphate biosynthesis; thiamine phosphate from 4-amino-2-methyl-5-diphosphomethylpyrimidine and 4-methyl-5-(2-phosphoethyl)-thiazole: step 1/1. Condenses 4-methyl-5-(beta-hydroxyethyl)thiazole monophosphate (THZ-P) and 2-methyl-4-amino-5-hydroxymethyl pyrimidine pyrophosphate (HMP-PP) to form thiamine monophosphate (TMP). This is Thiamine-phosphate synthase from Shigella sonnei (strain Ss046).